A 208-amino-acid polypeptide reads, in one-letter code: High frequency lysogenization protein HflD homolog (208 aa).

The protein belongs to the HflD family.

The protein localises to the cytoplasm. Its subcellular location is the cell inner membrane. The polypeptide is High frequency lysogenization protein HflD homolog (Edwardsiella ictaluri (strain 93-146)).